The primary structure comprises 469 residues: GTPase Der (469 aa).

EngA-type G domains lie at 3–166 and 177–350; these read PVIA…PEDE and LRLA…ESAN. GTP-binding positions include 9-16, 56-60, 118-121, 183-190, 230-234, and 295-298; these read GRPNVGKS, DTGGI, NKVD, DTAGV, and NKWD. Residues 351 to 435 form the KH-like domain; that stretch reads LKVSPAKLTQ…PVKIEFKTSE (85 aa).

Belongs to the TRAFAC class TrmE-Era-EngA-EngB-Septin-like GTPase superfamily. EngA (Der) GTPase family. As to quaternary structure, associates with the 50S ribosomal subunit.

In terms of biological role, GTPase that plays an essential role in the late steps of ribosome biogenesis. This Acinetobacter baumannii (strain AB0057) protein is GTPase Der.